A 61-amino-acid polypeptide reads, in one-letter code: Large ribosomal subunit protein eL24 (61 aa).

The Zn(2+) site is built by Cys-7, Cys-10, Cys-33, and Cys-37. The segment at 7–37 (CSFCGGDIPPATGMMHVRNDGTILWFCSNKC) adopts a C4-type zinc-finger fold.

The protein belongs to the eukaryotic ribosomal protein eL24 family. Part of the 50S ribosomal subunit. Forms a cluster with proteins L3 and L14. Zn(2+) is required as a cofactor.

Functionally, binds to the 23S rRNA. This chain is Large ribosomal subunit protein eL24, found in Metallosphaera sedula (strain ATCC 51363 / DSM 5348 / JCM 9185 / NBRC 15509 / TH2).